We begin with the raw amino-acid sequence, 412 residues long: 46 kDa FK506-binding nuclear protein (412 aa).

Composition is skewed to acidic residues over residues 95-113, 169-178, and 188-216; these read EEDL…EEEA, GEDIDTDEND, and EGDD…EEEE. Positions 95 to 304 are disordered; that stretch reads EEDLEDEEEA…PVEKKEKKQI (210 aa). Residues 247–257 show a composition bias toward basic residues; the sequence is KSQKRRLKKKL. Positions 271–303 are enriched in basic and acidic residues; sequence DKPKKEEPQQKAEKKKPEAKKEEAPVEKKEKKQ. Positions 324 to 412 constitute a PPIase FKBP-type domain; sequence GKVVMVYYEG…VFEVDLKNVK (89 aa).

This sequence belongs to the FKBP-type PPIase family. In terms of processing, phosphorylated by a nuclear kinase in the presence of Mg(2+) and ATP.

The protein localises to the nucleus. The enzyme catalyses [protein]-peptidylproline (omega=180) = [protein]-peptidylproline (omega=0). Inhibited by both FK506 and rapamycin. In terms of biological role, PPIases accelerate the folding of proteins. It catalyzes the cis-trans isomerization of proline imidic peptide bonds in oligopeptides. Binds double-stranded DNA in vitro. The sequence is that of 46 kDa FK506-binding nuclear protein (FKBP46) from Spodoptera frugiperda (Fall armyworm).